A 657-amino-acid polypeptide reads, in one-letter code: MMLPKSLTQGLLLAMLVGTAAMVQPYHLLSLLTSGQGALDRTALDGLLNTLVARVHCTDGPCEKCLSVETALALGKPDKPQLAPESVLESRYITYLSAAAALYLNDPEKTCKDIRAGLLASHVDDYLAKLESPEAMTLGLSQLLQKIEAHDASQPTREETCVDVPQLLEEAEEAGVSRSPGLVLTALLDHVLNGSCFQGLPSPQYFVDFVFRQLSSKPRNITLPELEDLMHHLGVGGEDHSDHGDHVDHSHLDREANHQDSELHATHNSSSSVWDTLCLSAKDVMAVYGLSEEAGVSPQAWAQLTPALVQQQLSEACSSSPIIHVQDQLSQAERYLYGSLATLLICLCAVFGLLLLTCAKCSTATHYIMQTFLSLAVGALTGDALLHLIPKVLGLHTHSGEVHSHEEESIGGQSTWRLLAVLGGFYIFFLFESFFNLLLPRDQDHEKDGPCSHGGHSHGISLQLSPSNLRQSKQPHESSRSDLVTEETPELLNPDTRRLRAELRMLPYLITLGDAVHNFADGLAVGAAFSSTWKTGLATSLAVFCHELPHELGDFAALLHAGLTVKRALLLNLASALTAFAGLYVALAVGVGEEGETWILAVATGLFLYVALCDMLPAMMNVRDQRPWLLFLLHNVGLLGGWTILLLLSLYEDSITF.

Positions 1 to 22 (MMLPKSLTQGLLLAMLVGTAAM) are cleaved as a signal peptide. Residues 23 to 335 (VQPYHLLSLL…QDQLSQAERY (313 aa)) lie on the Extracellular side of the membrane. Asn193, Asn220, and Asn268 each carry an N-linked (GlcNAc...) asparagine glycan. The helical transmembrane segment at 336-356 (LYGSLATLLICLCAVFGLLLL) threads the bilayer. The Cytoplasmic portion of the chain corresponds to 357-374 (TCAKCSTATHYIMQTFLS). A helical membrane pass occupies residues 375-395 (LAVGALTGDALLHLIPKVLGL). The Extracellular segment spans residues 396 to 417 (HTHSGEVHSHEEESIGGQSTWR). The chain crosses the membrane as a helical span at residues 418–438 (LLAVLGGFYIFFLFESFFNLL). Over 439 to 508 (LPRDQDHEKD…LRAELRMLPY (70 aa)) the chain is Cytoplasmic. The Essential for SLC39A4 endocytosis signature appears at 462-464 (LQL). The tract at residues 467–491 (SNLRQSKQPHESSRSDLVTEETPEL) is disordered. Residues 509–528 (LITLGDAVHNFADGLAVGAA) traverse the membrane as a helical segment. Zn(2+) contacts are provided by His517, Asn518, and Asp521. Residues 529–536 (FSSTWKTG) lie on the Extracellular side of the membrane. The helical transmembrane segment at 537-563 (LATSLAVFCHELPHELGDFAALLHAGL) threads the bilayer. His546, Glu547, and His550 together coordinate Zn(2+). The Cytoplasmic portion of the chain corresponds to 564-568 (TVKRA). The helical transmembrane segment at 569 to 589 (LLLNLASALTAFAGLYVALAV) threads the bilayer. Over 590-597 (GVGEEGET) the chain is Extracellular. The chain crosses the membrane as a helical span at residues 598–618 (WILAVATGLFLYVALCDMLPA). Topologically, residues 619-627 (MMNVRDQRP) are cytoplasmic. The helical transmembrane segment at 628–648 (WLLFLLHNVGLLGGWTILLLL) threads the bilayer. The Extracellular segment spans residues 649–657 (SLYEDSITF).

Belongs to the ZIP transporter (TC 2.A.5) family. Homodimer; homodimerization is mediated by the transmembrane domain. Post-translationally, the extracellular N-terminal ectodomain is cleaved when cells are Zn(2+) deficient, N-terminally cleaved SLC39A4 is internalized at a faster rate. In terms of processing, under excess Zn(2+) conditions, SLC39A4 on the cell surface is rapidly endocytosed, ubiquitinated and degraded. Glycosylated. Expressed in duodenum, jejunum, and ileum.

It is found in the cell membrane. The protein localises to the recycling endosome membrane. Its subcellular location is the apical cell membrane. It catalyses the reaction Zn(2+)(in) = Zn(2+)(out). Selective transporter that mediates the uptake of Zn(2+). Plays an essential role for dietary zinc uptake from small intestine. The Zn(2+) uniporter activity is regulated by zinc availability. Also exhibits polyspecific binding and transport of Cu(2+), Cd(2+) and possibly Ni(2+) but at higher concentrations. This is Zinc transporter ZIP4 (Slc39a4) from Rattus norvegicus (Rat).